The primary structure comprises 403 residues: S-adenosylmethionine synthase (403 aa).

An ATP-binding site is contributed by H17. D19 contributes to the Mg(2+) binding site. E45 provides a ligand contact to K(+). 2 residues coordinate L-methionine: E58 and Q104. Residues 104-114 (QSPDIAQGVDT) are flexible loop. ATP-binding positions include 179-181 (DGK), 250-251 (KF), D259, 265-266 (RK), A282, and K286. D259 contributes to the L-methionine binding site. K290 is a binding site for L-methionine.

This sequence belongs to the AdoMet synthase family. As to quaternary structure, homotetramer; dimer of dimers. The cofactor is Mg(2+). K(+) serves as cofactor.

The protein localises to the cytoplasm. It catalyses the reaction L-methionine + ATP + H2O = S-adenosyl-L-methionine + phosphate + diphosphate. The protein operates within amino-acid biosynthesis; S-adenosyl-L-methionine biosynthesis; S-adenosyl-L-methionine from L-methionine: step 1/1. Functionally, catalyzes the formation of S-adenosylmethionine (AdoMet) from methionine and ATP. The overall synthetic reaction is composed of two sequential steps, AdoMet formation and the subsequent tripolyphosphate hydrolysis which occurs prior to release of AdoMet from the enzyme. This Mycobacterium tuberculosis (strain ATCC 25177 / H37Ra) protein is S-adenosylmethionine synthase.